A 463-amino-acid chain; its full sequence is Fumarate hydratase class II (463 aa).

Substrate is bound by residues 98 to 100, 129 to 132, 139 to 141, and Thr187; these read SGT, HPND, and SSN. Catalysis depends on His188, which acts as the Proton donor/acceptor. Residue Ser318 is part of the active site. Residues Ser319 and 324 to 326 each bind substrate; that span reads KVN.

This sequence belongs to the class-II fumarase/aspartase family. Fumarase subfamily. As to quaternary structure, homotetramer.

Its subcellular location is the cytoplasm. It catalyses the reaction (S)-malate = fumarate + H2O. It functions in the pathway carbohydrate metabolism; tricarboxylic acid cycle; (S)-malate from fumarate: step 1/1. In terms of biological role, involved in the TCA cycle. Catalyzes the stereospecific interconversion of fumarate to L-malate. This Rhizobium meliloti (strain 1021) (Ensifer meliloti) protein is Fumarate hydratase class II.